Consider the following 252-residue polypeptide: Small ribosomal subunit protein uS2 (252 aa).

This sequence belongs to the universal ribosomal protein uS2 family.

The sequence is that of Small ribosomal subunit protein uS2 from Chlorobium phaeobacteroides (strain DSM 266 / SMG 266 / 2430).